The chain runs to 2527 residues: Leucine-rich repeat serine/threonine-protein kinase 2 (2527 aa).

The required for RAB29-mediated activation stretch occupies residues 1–969; it reads MASGACQGCE…RSSRLPSHMR (969 aa). A coiled-coil region spans residues 9–33; that stretch reads CEEEEEEEALKKLIVRLNNVQEGKQ. Phosphoserine is present on residues S910, S935, S955, and S973. The tract at residues 957–979 is disordered; it reads ESLRSSRLPSHMRQSDSSSSLAS. The span at 961 to 978 shows a compositional bias: low complexity; sequence SSRLPSHMRQSDSSSSLA. LRR repeat units follow at residues 983-1004, 1012-1033, 1036-1057, 1059-1080, 1084-1105, 1108-1129, 1130-1150, 1156-1171, 1174-1196, 1197-1218, 1221-1245, 1246-1267, and 1269-1291; these read HITS…SQKC, HLTK…LCET, CLIH…VLKM, RITN…DPAM, SLKQ…LAQV, KLEQ…LSLK, ELKI…DFLE, ESFS…MPAL, SITS…FSLP, HLRS…AHWK, NLRE…HVWS, RVEK…IGCL, and NLTS…MGKL. S1292 carries the post-translational modification Phosphoserine; by autocatalysis. In terms of domain architecture, Roc spans 1328-1511; the sequence is KAVPYNRMKL…KTIINESLNF (184 aa). 1341–1348 is a binding site for GTP; the sequence is GNTGSGKT. A Phosphoserine modification is found at S1444. In terms of domain architecture, COR spans 1543–1740; it reads TEFPVINRKH…RMYWRQGIYL (198 aa). Positions 1879–2146 constitute a Protein kinase domain; it reads EAPEFLLGDG…LICLMRHILI (268 aa). L1885, D1887, G1888, G1891, V1893, A1904, K1906, M1947, E1948, A1950, S1954, and R1957 together coordinate ATP. The Proton acceptor role is filled by D1994. Positions 1998, 2001, 2016, and 2017 each coordinate ATP. GTP is bound at residue 2098 to 2121; it reads EYGCAPWPMVEKLITKCLKENPQE. 7 WD repeats span residues 2139-2183, 2188-2228, 2233-2276, 2281-2327, 2333-2377, 2402-2438, and 2443-2497; these read CLMR…SLFD, RYSY…LVIN, TKRH…MIFE, KCKG…FSFS, QKLI…EVWD, KESK…LLLD, and RVIR…SIWD. Residue 2295–2298 coordinates GTP; that stretch reads DVST.

Belongs to the protein kinase superfamily. TKL Ser/Thr protein kinase family. Homodimer. Homotetramer; when activated by GTP-bound RAB29. Interacts with PRKN, PRDX3 and TPCN2. Interacts with VPS35. Interacts (via N-terminus) with RAB29; this interaction is direct and stimulates kinase activity. Interacts (via ROC domain) with SEC16A. Interacts with APP; interaction promotes phosphorylation of 'Thr-743' of APP. Interacts with MAPT. Interacts with RAB8A, RAB10, and RAB12. Interacts (via N-terminus) with RAB32. Interacts with YWHAG; this interaction is dependent on phosphorylation of Ser-910 and either Ser-935 or Ser-1444. Interacts with SFN; this interaction is dependent on phosphorylation of Ser-910 and/or Ser-935. Requires Mg(2+) as cofactor. Autophosphorylated at Ser-1292. Autophosphorylation is stimulated by RAB29. Phosphorylation of Ser-910 and Ser-935 or Ser-1444 facilitates interaction with YWHAG. Phosphorylation of Ser-910 and/or Ser-935 facilitates interaction with SFN. Post-translationally, ubiquitinated by TRIM1; undergoes 'Lys-48'-linked polyubiquitination leading to proteasomal degradation. Expressed in the brain (at protein level). Detected throughout the adult brain. Expressed in deep cerebral cortex layers, superficial cingulate cortex layers, the piriform cortex, hippocampal formation, caudate putamen, substantia nigra, the basolateral and basomedial anterior amygdala nuclei, reticular thalamic nucleus and also in the cerebellar granular cell layer. Highly expressed in the striatum, cortex and olfactory tubercle. Little or no expression in the substantia nigra, where dopaminergic neurons preferentially degenerate in Parkinson disease. Expression is particularly high in brain dopaminoceptive areas. High and strikingly specific expression in striatum and parts of cortex and no signals in dopamine neurons.

The protein resides in the cytoplasmic vesicle. The protein localises to the perikaryon. It is found in the cell projection. Its subcellular location is the axon. It localises to the dendrite. The protein resides in the golgi apparatus membrane. The protein localises to the endoplasmic reticulum membrane. It is found in the secretory vesicle. Its subcellular location is the synaptic vesicle membrane. It localises to the endosome. The protein resides in the lysosome. The protein localises to the mitochondrion outer membrane. It is found in the cytoplasm. Its subcellular location is the cytoskeleton. It localises to the phagosome. The enzyme catalyses L-threonyl-[protein] + ATP = O-phospho-L-threonyl-[protein] + ADP + H(+). It catalyses the reaction L-seryl-[protein] + ATP = O-phospho-L-seryl-[protein] + ADP + H(+). The catalysed reaction is GTP + H2O = GDP + phosphate + H(+). Kinase activity is regulated by the GTPase activity of the ROC domain. GTP-bound LRRK2 kinase activity is stimulated by RAB29. Phosphorylation of RAB10 'Thr-73' is stimulated by RAB29 and RAB32. Inhibited by small molecule inhibitors MLi-2 and LRRK2-IN-1. Functionally, serine/threonine-protein kinase which phosphorylates a broad range of proteins involved in multiple processes such as neuronal plasticity, innate immunity, autophagy, and vesicle trafficking. Is a key regulator of RAB GTPases by regulating the GTP/GDP exchange and interaction partners of RABs through phosphorylation. Phosphorylates RAB3A, RAB3B, RAB3C, RAB3D, RAB8A, RAB8B, RAB10, RAB12, RAB29, RAB35, and RAB43. Regulates the RAB3IP-catalyzed GDP/GTP exchange for RAB8A through the phosphorylation of 'Thr-72' on RAB8A. Inhibits the interaction between RAB8A and GDI1 and/or GDI2 by phosphorylating 'Thr-72' on RAB8A. Regulates primary ciliogenesis through phosphorylation of RAB8A and RAB10, which promotes SHH signaling in the brain. Together with RAB29, plays a role in the retrograde trafficking pathway for recycling proteins, such as mannose-6-phosphate receptor (M6PR), between lysosomes and the Golgi apparatus in a retromer-dependent manner. Regulates neuronal process morphology in the intact central nervous system (CNS). Plays an important role in recruiting SEC16A to endoplasmic reticulum exit sites (ERES) and in regulating ER to Golgi vesicle-mediated transport and ERES organization. Positively regulates autophagy through a calcium-dependent activation of the CaMKK/AMPK signaling pathway. The process involves activation of nicotinic acid adenine dinucleotide phosphate (NAADP) receptors, increase in lysosomal pH, and calcium release from lysosomes. Phosphorylates PRDX3. By phosphorylating APP on 'Thr-743', which promotes the production and the nuclear translocation of the APP intracellular domain (AICD), regulates dopaminergic neuron apoptosis. Acts as a positive regulator of innate immunity by mediating phosphorylation of RIPK2 downstream of NOD1 and NOD2, thereby enhancing RIPK2 activation. Independent of its kinase activity, inhibits the proteasomal degradation of MAPT, thus promoting MAPT oligomerization and secretion. In addition, has GTPase activity via its Roc domain which regulates LRKK2 kinase activity. Recruited by RAB29/RAB7L1 to overloaded lysosomes where it phosphorylates and stabilizes RAB8A and RAB10 which promote lysosomal content release and suppress lysosomal enlargement through the EHBP1 and EHBP1L1 effector proteins. The polypeptide is Leucine-rich repeat serine/threonine-protein kinase 2 (Lrrk2) (Mus musculus (Mouse)).